Here is a 252-residue protein sequence, read N- to C-terminus: Uracil-DNA glycosylase (252 aa).

The active-site Proton acceptor is aspartate 78.

This sequence belongs to the uracil-DNA glycosylase (UDG) superfamily. UNG family.

The protein localises to the cytoplasm. The enzyme catalyses Hydrolyzes single-stranded DNA or mismatched double-stranded DNA and polynucleotides, releasing free uracil.. Functionally, excises uracil residues from the DNA which can arise as a result of misincorporation of dUMP residues by DNA polymerase or due to deamination of cytosine. The sequence is that of Uracil-DNA glycosylase from Bordetella avium (strain 197N).